We begin with the raw amino-acid sequence, 202 residues long: Dephospho-CoA kinase (202 aa).

The DPCK domain maps to 4 to 200 (VVGVTGGIGS…QRYLAATVAQ (197 aa)). 12–17 (GSGKSA) serves as a coordination point for ATP.

Belongs to the CoaE family.

The protein localises to the cytoplasm. The enzyme catalyses 3'-dephospho-CoA + ATP = ADP + CoA + H(+). The protein operates within cofactor biosynthesis; coenzyme A biosynthesis; CoA from (R)-pantothenate: step 5/5. In terms of biological role, catalyzes the phosphorylation of the 3'-hydroxyl group of dephosphocoenzyme A to form coenzyme A. This Idiomarina loihiensis (strain ATCC BAA-735 / DSM 15497 / L2-TR) protein is Dephospho-CoA kinase.